Consider the following 139-residue polypeptide: Putative pre-16S rRNA nuclease (139 aa).

The protein belongs to the YqgF nuclease family.

The protein localises to the cytoplasm. Its function is as follows. Could be a nuclease involved in processing of the 5'-end of pre-16S rRNA. The protein is Putative pre-16S rRNA nuclease of Streptococcus sanguinis (strain SK36).